A 324-amino-acid chain; its full sequence is MNKIVLYLLVYGATLGAAYDLLKAPSYFEEFLHKFNKNYSSESEKLRRFKIFQHNLEEIINKNQNDTSAQYEINKFSDLSKDETISKYTGLSLPLQKQNFCEVVVLDRPPDKGPLEFDWRRLNKVTSVKNQGMCGACWAFATLGSLESQFAIKHDQLINLSEQQLIDCDFVDVGCDGGLLHTAYEAVMNMGGIQAENDYPYEANNGPCRVNAAKFVVRVKKCYRYVTLFEEKLKDLLRIVGPIPVAIDASDIVGYKRGIIRYCENHGLNHAVLLVGYGVENGIPFWILKNTWGADWGEQGYFRVQQNINACGIKNELPSSAEIY.

An N-terminal signal peptide occupies residues 1–16 (MNKIVLYLLVYGATLG). The propeptide at 17–113 (AAYDLLKAPS…VVLDRPPDKG (97 aa)) is activation peptide. Disulfide bonds link cysteine 134-cysteine 175, cysteine 168-cysteine 208, and cysteine 263-cysteine 311. Cysteine 137 is an active-site residue. N-linked (GlcNAc...) asparagine; by host glycosylation occurs at asparagine 159. Residues histidine 270 and asparagine 290 contribute to the active site.

This sequence belongs to the peptidase C1 family. In terms of processing, synthesized as an inactive proenzyme and activated by proteolytic removal of the inhibitory propeptide.

The catalysed reaction is Endopeptidase of broad specificity, hydrolyzing substrates of both cathepsin L and cathepsin B.. Its function is as follows. Cysteine protease that plays an essential role in host liquefaction to facilitate horizontal transmission of the virus. May participate in the degradation of foreign protein expressed by the baculovirus system. This is Viral cathepsin (VCATH) from Antheraea pernyi nuclear polyhedrosis virus (ApNPV).